The chain runs to 652 residues: Thioredoxin reductase 3 (652 aa).

Over residues 1 to 12 (MEKPPSPPPPPR) the composition is skewed to pro residues. Residues 1-62 (MEKPPSPPPP…TSRPSSEARE (62 aa)) form a disordered region. Residue Arg-34 is modified to Asymmetric dimethylarginine; alternate. At Arg-34 the chain carries Omega-N-methylarginine; alternate. At Ser-50 the chain carries Phosphoserine. The Glutaredoxin domain occupies 65–165 (RRRLRDLIEG…KLLQDDSAHD (101 aa)). 167 to 196 (DLIIIGGGSGGLSCAKEAANLGKKVMVLDF) contacts FAD. Cys-212 and Cys-217 are joined by a disulfide. Lys-388 is modified (N6-succinyllysine). Catalysis depends on His-625, which acts as the Proton acceptor. The cysteinyl-selenocysteine (Cys-Sec) cross-link spans 650–651 (CU). Position 651 (Sec-651) is a non-standard amino acid, selenocysteine.

Belongs to the class-I pyridine nucleotide-disulfide oxidoreductase family. In terms of assembly, homodimer. The cofactor is FAD. In terms of tissue distribution, expressed preferentially in testis where it is found in spermatids and spermatocytes but not in sperm. In elongating spermatids, expressed at the site of mitochondrial sheath formation. Low levels in other tissues including heart, lung, liver, kidney, brain, muscle and prostate.

It is found in the cytoplasm. The protein resides in the nucleus. Its subcellular location is the microsome. The protein localises to the endoplasmic reticulum. The enzyme catalyses [thioredoxin]-dithiol + NADP(+) = [thioredoxin]-disulfide + NADPH + H(+). Its function is as follows. Displays thioredoxin reductase, glutaredoxin and glutathione reductase activities. Catalyzes disulfide bond isomerization. Promotes disulfide bond formation between GPX4 and various sperm proteins and may play a role in sperm maturation by promoting formation of sperm structural components. This Mus musculus (Mouse) protein is Thioredoxin reductase 3.